The following is a 251-amino-acid chain: uncharacterized protein (251 aa).

The protein to M.jannaschii MJ1311.

This is an uncharacterized protein from Methanocaldococcus jannaschii (strain ATCC 43067 / DSM 2661 / JAL-1 / JCM 10045 / NBRC 100440) (Methanococcus jannaschii).